Consider the following 255-residue polypeptide: Putative ankyrin repeat protein R880 (255 aa).

ANK repeat units lie at residues 79 to 109 (SGIN…DIHY), 110 to 139 (KTDY…NINT), 141 to 169 (DCYA…NVRK), 171 to 199 (RDLA…DVRS), and 201 to 229 (KNYA…NFRV).

The polypeptide is Putative ankyrin repeat protein R880 (Acanthamoeba polyphaga (Amoeba)).